Here is a 1244-residue protein sequence, read N- to C-terminus: Membrane-associated phosphatidylinositol transfer protein 1 (1244 aa).

Thr59 carries the phosphothreonine modification. 2 disordered regions span residues Lys258 to Ser331 and Ala339 to Ser358. Thr287 carries the post-translational modification Phosphothreonine; by CDK1. Over residues Ala299–Ser319 the composition is skewed to low complexity. 9 positions are modified to phosphoserine: Ser300, Ser304, Ser319, Ser326, Ser329, Ser342, Ser345, Ser346, and Ser373. Ser382 bears the Phosphoserine; by CDK1 mark. Residues Ala581–Ser682 form a disordered region. Ser593, Ser600, and Ser621 each carry phosphoserine. Over residues Gly643–Trp658 the composition is skewed to polar residues. The DDHD domain maps to Leu686–Glu880. Ser896 is modified (phosphoserine). Residues Gln1206 to Glu1244 form a disordered region. Omega-N-methylarginine occurs at positions 1211 and 1218. Ser1237 carries the phosphoserine modification.

Belongs to the PtdIns transfer protein family. PI transfer class IIA subfamily. As to quaternary structure, interacts with PIK4CA. Interacts with PTK2B via its C-terminus. Interacts with RHOA. Has higher affinity for the inactive, GDP-bound form of RHOA. The CDK1-phosphorylated form interacts with PLK1. Interacts with VAPB. Post-translationally, phosphorylated on multiple sites by CDK1 at the onset of mitosis. Phosphorylation facilitates dissociation from the Golgi complex and is required for interaction with PLK1. In terms of processing, phosphorylated on threonine residues upon treatment with oleic acid. Phosphorylated on tyrosine residues by PTK2B. Ubiquitous.

It localises to the cytoplasm. The protein resides in the golgi apparatus. Its subcellular location is the golgi stack membrane. The protein localises to the endoplasmic reticulum membrane. It is found in the lipid droplet. It localises to the cleavage furrow. The protein resides in the midbody. The catalysed reaction is a 1,2-diacyl-sn-glycero-3-phospho-(1D-myo-inositol)(in) = a 1,2-diacyl-sn-glycero-3-phospho-(1D-myo-inositol)(out). Catalyzes the transfer of phosphatidylinositol (PI) between membranes. Binds PI, phosphatidylcholine (PC) and phosphatidic acid (PA) with the binding affinity order of PI &gt; PA &gt; PC. Regulates RHOA activity, and plays a role in cytoskeleton remodeling. Necessary for normal completion of cytokinesis. Plays a role in maintaining normal diacylglycerol levels in the Golgi apparatus. Necessary for maintaining the normal structure of the endoplasmic reticulum and the Golgi apparatus. Required for protein export from the endoplasmic reticulum and the Golgi. Binds calcium ions. The protein is Membrane-associated phosphatidylinositol transfer protein 1 (PITPNM1) of Homo sapiens (Human).